Reading from the N-terminus, the 142-residue chain is Multiprotein-bridging factor 1a (142 aa).

Residues 51–64 are compositionally biased toward polar residues; sequence GTNKAASSGTSLNT. The interval 51-77 is disordered; that stretch reads GTNKAASSGTSLNTKMLDDDTENLTHE. The HTH cro/C1-type domain occupies 87–141; it reads IMQARTDKKLTQSQLAQIINEKPQVIQEYESGKAIPNQQILSKLERALGAKLRGK. The H-T-H motif DNA-binding region spans 98–117; the sequence is QSQLAQIINEKPQVIQEYES.

It belongs to the MBF1 family. In terms of tissue distribution, expressed in leaves, roots, stems, flowers, siliques and shoots. Detected only in anthers and some seeds in siliques.

It localises to the nucleus. It is found in the nucleolus. Functionally, transcriptional coactivator that stimulates transcriptional activity by bridging regulatory proteins and TBP, thereby recruiting TBP to promoters occupied by DNA-binding regulators. This chain is Multiprotein-bridging factor 1a (MBF1A), found in Arabidopsis thaliana (Mouse-ear cress).